We begin with the raw amino-acid sequence, 390 residues long: Scoulerine-9-O-methyltransferase 1 (390 aa).

Glutamate 153 is a binding site for substrate. Residues methionine 207, serine 211, glycine 235, aspartate 258, 278–279, and lysine 292 contribute to the S-adenosyl-L-methionine site; that span reads DM. The Proton acceptor role is filled by histidine 296. A substrate-binding site is contributed by 296 to 297; the sequence is HD.

This sequence belongs to the class I-like SAM-binding methyltransferase superfamily. Cation-independent O-methyltransferase family. COMT subfamily. In terms of assembly, homodimer. Highly expressed in capsules. Expressed is stems. Expressed at low levels in roots.

The catalysed reaction is (S)-scoulerine + S-adenosyl-L-methionine = (S)-tetrahydrocolumbamine + S-adenosyl-L-homocysteine + H(+). The enzyme catalyses (S)-tetrahydrocolumbamine + S-adenosyl-L-methionine = (S)-tetrahydropalmatine + S-adenosyl-L-homocysteine + H(+). It carries out the reaction (S)-norreticuline + S-adenosyl-L-methionine = (S)-norcodamine + S-adenosyl-L-homocysteine + H(+). It catalyses the reaction (S)-reticuline + S-adenosyl-L-methionine = (S)-codamine + S-adenosyl-L-homocysteine + H(+). The protein operates within alkaloid biosynthesis. In terms of biological role, methyltransferase involved in the biosynthesis of the benzylisoquinoline alkaloid noscapine. Catalyzes the conversion of (S)-scoulerine to (S)-tetrahydrocolumbamine. Can convert (S)-tetrahydrocolumbamine to tetrahydropalmatine. Can convert (S)-norreticuline to (S)-norcodamine. Can convert (S)-reticuline to (S)-codamine. Substrate preference is (S)-scoulerine &gt; (S)-tetrahydrocolumbamine &gt; (S)-norreticuline &gt; (S)-reticuline. The chain is Scoulerine-9-O-methyltransferase 1 from Papaver somniferum (Opium poppy).